Reading from the N-terminus, the 152-residue chain is Large ribosomal subunit protein bL9 (152 aa).

Belongs to the bacterial ribosomal protein bL9 family.

Binds to the 23S rRNA. The sequence is that of Large ribosomal subunit protein bL9 from Thermosynechococcus vestitus (strain NIES-2133 / IAM M-273 / BP-1).